We begin with the raw amino-acid sequence, 201 residues long: Anthranilate synthase component 2 (201 aa).

One can recognise a Glutamine amidotransferase type-1 domain in the interval 3–196 (NILFIDNFDS…IDWALSSTPA (194 aa)). 57-59 (GPG) serves as a coordination point for L-glutamine. Cysteine 84 acts as the Nucleophile; for GATase activity in catalysis. L-glutamine is bound by residues glutamine 88 and 134–135 (SL). Catalysis depends on for GATase activity residues histidine 170 and glutamate 172.

As to quaternary structure, heterotetramer consisting of two non-identical subunits: a beta subunit (TrpG) and a large alpha subunit (TrpE).

It carries out the reaction chorismate + L-glutamine = anthranilate + pyruvate + L-glutamate + H(+). The protein operates within amino-acid biosynthesis; L-tryptophan biosynthesis; L-tryptophan from chorismate: step 1/5. In terms of biological role, part of a heterotetrameric complex that catalyzes the two-step biosynthesis of anthranilate, an intermediate in the biosynthesis of L-tryptophan. In the first step, the glutamine-binding beta subunit (TrpG) of anthranilate synthase (AS) provides the glutamine amidotransferase activity which generates ammonia as a substrate that, along with chorismate, is used in the second step, catalyzed by the large alpha subunit of AS (TrpE) to produce anthranilate. In the absence of TrpG, TrpE can synthesize anthranilate directly from chorismate and high concentrations of ammonia. The chain is Anthranilate synthase component 2 (trpG) from Vibrio cholerae serotype O1 (strain ATCC 39315 / El Tor Inaba N16961).